Here is a 496-residue protein sequence, read N- to C-terminus: MKMDSAVSEEAFERLTAKLKARVGGEIYSSWFGRLKLDDISKSIVRLSVPTAFLRSWINNHYSELLTELWQEENPQILKVEVVVRGVSRVVRSAAPAETCDNAEAKPAVTPREKMVFPVGQSFGGQSLGEKRGSAVVAESAAATGAVLGSPLDPRYTFDTFVDGASNRVALAAARTIAEAGSSAVRFNPLFIHASVGLGKTHLLQAIAAAALQRQEKARVVYLTAEYFMWRFATAIRDNNALSFKEQLRDIDLLVIDDMQFLQGKSIQHEFCHLLNTLLDSAKQVVVAADRAPSELESLDVRVRSRLQGGVALEVAAPDYEMRLEMLRRRLASAQCEDASLDIGEEILAHVARTVTGSGRELEGAFNQLLFRQSFEPNISIDRVDELLGHLTRAGEPKRIRIEEIQRIVARHYNVSKQDLLSNRRTRTIVKPRQVAMYLAKMMTPRSLPEIGRRFGGRDHTTVLHAVRKIEDLVGADTKLAQELELLKRLINDQAA.

The domain I, interacts with DnaA modulators stretch occupies residues 1–76; sequence MKMDSAVSEE…TELWQEENPQ (76 aa). The segment at 76–150 is domain II; sequence QILKVEVVVR…AAATGAVLGS (75 aa). The segment at 151–373 is domain III, AAA+ region; that stretch reads PLDPRYTFDT…GAFNQLLFRQ (223 aa). The ATP site is built by Gly-197, Gly-199, Lys-200, and Thr-201. The interval 374–496 is domain IV, binds dsDNA; it reads SFEPNISIDR…LKRLINDQAA (123 aa).

This sequence belongs to the DnaA family. In terms of assembly, oligomerizes as a right-handed, spiral filament on DNA at oriC.

Its subcellular location is the cytoplasm. Plays an essential role in the initiation and regulation of chromosomal replication. ATP-DnaA binds to the origin of replication (oriC) to initiate formation of the DNA replication initiation complex once per cell cycle. Binds the DnaA box (a 9 base pair repeat at the origin) and separates the double-stranded (ds)DNA. Forms a right-handed helical filament on oriC DNA; dsDNA binds to the exterior of the filament while single-stranded (ss)DNA is stabiized in the filament's interior. The ATP-DnaA-oriC complex binds and stabilizes one strand of the AT-rich DNA unwinding element (DUE), permitting loading of DNA polymerase. After initiation quickly degrades to an ADP-DnaA complex that is not apt for DNA replication. Binds acidic phospholipids. The protein is Chromosomal replication initiator protein DnaA of Brucella abortus biovar 1 (strain 9-941).